Consider the following 224-residue polypeptide: Glutathione S-transferase U8 (224 aa).

One can recognise a GST N-terminal domain in the interval 5–85 (EHVKLLGLWG…YIEDTWKTTH (81 aa)). Residues 15–16 (SP), 42–43 (NR), 56–57 (KV), and 69–70 (ES) contribute to the glutathione site. The GST C-terminal domain maps to 91–213 (DPYERAMARF…LPPKEKLVAV (123 aa)). Thr-152 carries the phosphothreonine modification.

The protein belongs to the GST superfamily. Tau family.

It localises to the cytoplasm. It is found in the cytosol. The catalysed reaction is RX + glutathione = an S-substituted glutathione + a halide anion + H(+). Functionally, may be involved in the conjugation of reduced glutathione to a wide number of exogenous and endogenous hydrophobic electrophiles and have a detoxification role against certain herbicides. This Arabidopsis thaliana (Mouse-ear cress) protein is Glutathione S-transferase U8 (GSTU8).